The following is a 212-amino-acid chain: Calaxin (212 aa).

3 consecutive EF-hand domains span residues 65–100, 101–136, and 146–181; these read TDDMIMDRVFRGFDKDNDGCISVTEWVYGLSVFLRG, TLEEKMKYCFEVFDLNGDSFISKEEMFHMLKNSLLK, and GIKDLVEITLKKMDHDHDGKLSFADYEQAVREETLL. Ca(2+) contacts are provided by Asp78, Asp80, Asp82, Cys84, Glu89, Asp114, Asn116, Asp118, Glu125, Asp159, Asp161, Asp163, Lys165, and Asp170.

In terms of assembly, component of the outer dynein arm-docking complex along with ODAD1, ODAD2, ODAD3 and ODAD4. In terms of tissue distribution, expressed in trachea multiciliated cells.

It localises to the cytoplasm. Its subcellular location is the cytoskeleton. It is found in the cilium axoneme. The protein localises to the cell projection. The protein resides in the cilium. It localises to the flagellum. Its function is as follows. Component of the outer dynein arm-docking complex (ODA-DC) that mediates outer dynein arms (ODA) binding onto the doublet microtubule. Seems to regulate the assembly of both ODAs and their axonemal docking complex onto ciliary microtubules. Regulates ciliary and flagellar motility and is required for cilia-driven determination of body laterality. In Bos taurus (Bovine), this protein is Calaxin (CLXN).